Consider the following 346-residue polypeptide: Patr class I histocompatibility antigen, CH28 alpha chain (346 aa).

A signal peptide spans 1–21; it reads MAPRSLLLLFSGALALTETWA. Residues 22 to 111 form an alpha-1 region; it reads GSHSLRYFST…LLRRYNQSEA (90 aa). Residues 22 to 305 lie on the Extracellular side of the membrane; that stretch reads GSHSLRYFST…EQSPQPTIPI (284 aa). An N-linked (GlcNAc...) asparagine glycan is attached at Asn-107. The tract at residues 112–203 is alpha-2; the sequence is GSHTLQGMNG…ENGKETLQRA (92 aa). Disulfide bonds link Cys-122–Cys-185 and Cys-224–Cys-280. Residues 204–295 form an alpha-3 region; it reads DPPKAHIAHH…GLPQPLTLRW (92 aa). The Ig-like C1-type domain occupies 206–294; the sequence is PKAHIAHHPI…EGLPQPLTLR (89 aa). The tract at residues 296–305 is connecting peptide; sequence EQSPQPTIPI. Residues 306–329 form a helical membrane-spanning segment; that stretch reads VGIVAGLVVLGAVVTGAVVAAVMW. The Cytoplasmic segment spans residues 330 to 346; that stretch reads RKKSSDRNRGSYSQAAV.

This sequence belongs to the MHC class I family. Heterodimer of an alpha chain and a beta chain (beta-2-microglobulin).

The protein resides in the membrane. In terms of biological role, involved in the presentation of foreign antigens to the immune system. This is Patr class I histocompatibility antigen, CH28 alpha chain from Pan troglodytes (Chimpanzee).